Reading from the N-terminus, the 219-residue chain is Lipid transferase CIDEB (219 aa).

The region spanning 34–110 (PQRPFRVCDH…VLQSGQSWSP (77 aa)) is the CIDE-N domain.

The protein belongs to the CIDE family. Interacts with DFFA. Interacts with DFFB; inhibited by DFFB. Interacts with APOB. Interacts with PREB/SEC12; facilitating loading of SCAP-SREBP into COPII vesicles. As to quaternary structure, (Microbial infection) Interacts (via N-terminus) with HCV non-structural protein 5A (via N-terminus); this interaction seems to regulate the association of HCV particles with ApoE. Highly expressed in liver and small intestine and, at lower levels, in colon, kidney and spleen.

Its subcellular location is the lipid droplet. The protein localises to the endoplasmic reticulum membrane. It localises to the golgi apparatus. It is found in the cytoplasmic vesicle. The protein resides in the COPI-coated vesicle. In terms of biological role, lipid transferase specifically expressed in hepatocytes, which promotes unilocular lipid droplet formation by mediating lipid droplet fusion. Lipid droplet fusion promotes their enlargement, restricting lipolysis and favoring lipid storage. Localizes on the lipid droplet surface, at focal contact sites between lipid droplets, and mediates atypical lipid droplet fusion by promoting directional net neutral lipid transfer from the smaller to larger lipid droplets. The transfer direction may be driven by the internal pressure difference between the contacting lipid droplet pair. Promotes lipid exchange and lipid droplet fusion in both small and large lipid droplet-containing hepatocytes. In addition to its role in lipid droplet fusion, also involved in cytoplasmic vesicle biogenesis and transport. Required for very-low-density lipoprotein (VLDL) lipidation and maturation. Probably involved in the biogenesis of VLDL transport vesicles by forming a COPII vesicle coat and facilitating the formation of endoplasmic reticulum-derived large vesicles. Also involved in sterol-regulated export of the SCAP-SREBP complex, composed of SCAP, SREBF1/SREBP1 and SREBF2/SREBP2, by promoting loading of SCAP-SREBP into COPII vesicles. May also activate apoptosis. Its function is as follows. (Microbial infection) Involved in Hepatatis C virus (HCV) assembly and required for HCV entry into hepatocytes. This chain is Lipid transferase CIDEB, found in Homo sapiens (Human).